The chain runs to 243 residues: Large ribosomal subunit protein uL2 (243 aa).

A compositionally biased stretch (basic residues) spans 1–12; sequence MGRRIQGQRRGR. 2 disordered regions span residues 1-38 and 198-243; these read MGRRIQGQRRGRGTSTFRAPSHRYKAELSHKQSESDDT and VDHP…GSSE. 2 stretches are compositionally biased toward basic and acidic residues: residues 24 to 34 and 221 to 231; these read YKAELSHKQSE and PPGRKVGDIAS.

It belongs to the universal ribosomal protein uL2 family. As to quaternary structure, part of the 50S ribosomal subunit. Forms a bridge to the 30S subunit in the 70S ribosome.

Its function is as follows. One of the primary rRNA binding proteins. Required for association of the 30S and 50S subunits to form the 70S ribosome, for tRNA binding and peptide bond formation. It has been suggested to have peptidyltransferase activity; this is somewhat controversial. Makes several contacts with the 16S rRNA in the 70S ribosome. The sequence is that of Large ribosomal subunit protein uL2 from Haloquadratum walsbyi (strain DSM 16790 / HBSQ001).